The primary structure comprises 244 residues: Uridylate kinase (244 aa).

18 to 21 (KISG) contributes to the ATP binding site. The interval 26-31 (GDQGYG) is involved in allosteric activation by GTP. A UMP-binding site is contributed by Gly-60. Positions 61 and 65 each coordinate ATP. UMP contacts are provided by residues Asp-80 and 141–148 (TGNPYFTT). Residues Thr-168, Tyr-174, and Asp-177 each contribute to the ATP site.

The protein belongs to the UMP kinase family. Homohexamer.

It localises to the cytoplasm. It carries out the reaction UMP + ATP = UDP + ADP. It participates in pyrimidine metabolism; CTP biosynthesis via de novo pathway; UDP from UMP (UMPK route): step 1/1. With respect to regulation, allosterically activated by GTP. Inhibited by UTP. Its function is as follows. Catalyzes the reversible phosphorylation of UMP to UDP. This chain is Uridylate kinase, found in Paracoccus denitrificans (strain Pd 1222).